The following is a 381-amino-acid chain: Chorismate synthase (381 aa).

NADP(+) is bound by residues arginine 39 and arginine 45. FMN-binding positions include 127 to 129 (RAS), 248 to 249 (QS), glycine 293, 308 to 312 (KPIPT), and arginine 334.

Belongs to the chorismate synthase family. Homotetramer. It depends on FMNH2 as a cofactor.

The enzyme catalyses 5-O-(1-carboxyvinyl)-3-phosphoshikimate = chorismate + phosphate. It functions in the pathway metabolic intermediate biosynthesis; chorismate biosynthesis; chorismate from D-erythrose 4-phosphate and phosphoenolpyruvate: step 7/7. Functionally, catalyzes the anti-1,4-elimination of the C-3 phosphate and the C-6 proR hydrogen from 5-enolpyruvylshikimate-3-phosphate (EPSP) to yield chorismate, which is the branch point compound that serves as the starting substrate for the three terminal pathways of aromatic amino acid biosynthesis. This reaction introduces a second double bond into the aromatic ring system. In Caldicellulosiruptor saccharolyticus (strain ATCC 43494 / DSM 8903 / Tp8T 6331), this protein is Chorismate synthase.